A 425-amino-acid polypeptide reads, in one-letter code: Dihydroorotase (425 aa).

Zn(2+) contacts are provided by His56 and His58. Residues 58 to 60 (HYR) and Asn90 contribute to the substrate site. Zn(2+)-binding residues include Asp148, His175, and His228. Residue Asn274 participates in substrate binding. Asp301 contributes to the Zn(2+) binding site. The active site involves Asp301. Residues His305 and 319 to 320 (FG) contribute to the substrate site.

It belongs to the metallo-dependent hydrolases superfamily. DHOase family. Class I DHOase subfamily. Zn(2+) is required as a cofactor.

It carries out the reaction (S)-dihydroorotate + H2O = N-carbamoyl-L-aspartate + H(+). The protein operates within pyrimidine metabolism; UMP biosynthesis via de novo pathway; (S)-dihydroorotate from bicarbonate: step 3/3. Its function is as follows. Catalyzes the reversible cyclization of carbamoyl aspartate to dihydroorotate. The polypeptide is Dihydroorotase (Lactobacillus delbrueckii subsp. bulgaricus (strain ATCC BAA-365 / Lb-18)).